Here is a 428-residue protein sequence, read N- to C-terminus: MNKGPRHRPKFLSKKGKKLRIMVAGSSYTSYQACINSLCSKQILEAETEIDPLKAHIDRILEIREFNADILEDEFHVDLTVIEVNGFGDKIDNSASFEVVTHYLESQFDQALIEESKIKRNSKFTDTRVDALLYFIAPRGHCLSEFDLEAMKRFSKRVNVIPVIGNSNAFTEEELKNFKDVIMKDLKQCNIKVFDFPWDPEEDEDEVIEDNKRLWESVPFAVSGGVSEEDEEGYQRIVKKFQWGTFVIDDPAHSDFLNLKTVLFISHLDILKSITKQTYYENYRTEKLSNDSPSNTSLSLQKQNSIVANEDKRSVNGSERTETRSSIDQSEMRTNVSDSTKSEELKKINSIKVDNTSSLKCDSYGNTKTKTNQLNCEQIGLEVISPKEFPHRTTSSRNSLPNNTTKELEMKKMDDLSHERYENLPFYR.

Residues 15 to 290 form the Septin-type G domain; that stretch reads KGKKLRIMVA…ENYRTEKLSN (276 aa). A G1 motif region spans residues 25-32; it reads GSSYTSYQ. Residues 25-32, Gly86, 166-174, and Gly224 contribute to the GTP site; these read GSSYTSYQ and NSNAFTEEE. Positions 83–86 are G3 motif; sequence EVNG. Positions 165–168 are G4 motif; it reads GNSN. Disordered stretches follow at residues 287–345 and 387–414; these read KLSN…SEEL and KEFP…KKMD. Over residues 290–307 the composition is skewed to polar residues; sequence NDSPSNTSLSLQKQNSIV. The segment covering 309 to 325 has biased composition (basic and acidic residues); the sequence is NEDKRSVNGSERTETRS. Composition is skewed to polar residues over residues 326–339 and 392–405; these read SIDQ…VSDS and RTTS…NNTT.

Belongs to the TRAFAC class TrmE-Era-EngA-EngB-Septin-like GTPase superfamily. Septin GTPase family. Component of the sporulation-specific septin complex composed of at least spn2, spn5, spn6 and spn7.

It is found in the cytoplasm. Its subcellular location is the nucleus. The protein localises to the forespore membrane. In terms of biological role, septin-like protein involved in the correct orientation of forespore membrane extension during sporulation. Binds phosphatidylinositol 4-phosphate. The chain is Septin homolog spn7 (spn7) from Schizosaccharomyces pombe (strain 972 / ATCC 24843) (Fission yeast).